Consider the following 74-residue polypeptide: MQTACWVMVMMMVWITAPLSEGGKLNDVIRGLVPDDVTPQLILRSLFFHRPSDSVVRPTVPVRICYWKVCPPSP.

The signal sequence occupies residues M1–G22. Positions G23–R57 are excised as a propeptide. A disulfide bridge connects residues C65 and C70. A D-tryptophan modification is found at W67. Residues P71, P72, and P74 each carry the 4-hydroxyproline modification.

The protein belongs to the conotoxin C superfamily. Consomatin family. As to expression, expressed by the venom duct.

Its subcellular location is the secreted. Moderately activates human somatostatin receptors (SSTR) with a preferential activation of SSTR1 and SSTR4. In vivo, does not cause behavioral changes in mice within a few minutes of intracranial injection, but causes a progressive loss of movement thereafter. Four to five hours after injection, mice recover, even with the highest dose tested. Shows antinociception and antihyperalgesia activities in two mouse models of acute pain, most probably by acting outside the central nervous system. This chain is Consomatin Gh1, found in Conus grahami (Cone snail).